Reading from the N-terminus, the 171-residue chain is Secretion monitor (171 aa).

An N-terminal signal peptide occupies residues 1–30 (MIGILNRWRQFGRRYFWPHLLLGMVAASLG).

It belongs to the SecM family.

The protein resides in the cytoplasm. The protein localises to the cytosol. It is found in the periplasm. Its function is as follows. Regulates secA expression by translational coupling of the secM secA operon. Translational pausing at a specific Pro residue 5 residues before the end of the protein may allow disruption of a mRNA repressor helix that normally suppresses secA translation initiation. The polypeptide is Secretion monitor (Pectobacterium atrosepticum (strain SCRI 1043 / ATCC BAA-672) (Erwinia carotovora subsp. atroseptica)).